We begin with the raw amino-acid sequence, 119 residues long: Beta-2-microglobulin (119 aa).

The signal sequence occupies residues Met1–Ala20. The Ig-like C1-type domain maps to Pro25–Lys114. The cysteines at positions 45 and 100 are disulfide-linked.

It belongs to the beta-2-microglobulin family. As to quaternary structure, heterodimer of an alpha chain and a beta chain. Beta-2-microglobulin is the beta-chain of major histocompatibility complex class I molecules.

It localises to the secreted. Its function is as follows. Component of the class I major histocompatibility complex (MHC). Involved in the presentation of peptide antigens to the immune system. The protein is Beta-2-microglobulin (B2M) of Cebus albifrons (White-fronted capuchin).